Here is a 199-residue protein sequence, read N- to C-terminus: Large ribosomal subunit protein uL10 (199 aa).

It belongs to the universal ribosomal protein uL10 family. In terms of assembly, part of the ribosomal stalk of the 50S ribosomal subunit. The N-terminus interacts with L11 and the large rRNA to form the base of the stalk. The C-terminus forms an elongated spine to which L12 dimers bind in a sequential fashion forming a multimeric L10(L12)X complex.

Its function is as follows. Forms part of the ribosomal stalk, playing a central role in the interaction of the ribosome with GTP-bound translation factors. This Aquifex aeolicus (strain VF5) protein is Large ribosomal subunit protein uL10 (rplJ).